The chain runs to 214 residues: Ribosomal RNA small subunit methyltransferase G (214 aa).

Residues glycine 73, leucine 78, 124-125 (VE), and arginine 139 contribute to the S-adenosyl-L-methionine site.

The protein belongs to the methyltransferase superfamily. RNA methyltransferase RsmG family.

The protein resides in the cytoplasm. The catalysed reaction is guanosine(527) in 16S rRNA + S-adenosyl-L-methionine = N(7)-methylguanosine(527) in 16S rRNA + S-adenosyl-L-homocysteine. Its function is as follows. Specifically methylates the N7 position of guanine in position 527 of 16S rRNA. In Aeromonas hydrophila subsp. hydrophila (strain ATCC 7966 / DSM 30187 / BCRC 13018 / CCUG 14551 / JCM 1027 / KCTC 2358 / NCIMB 9240 / NCTC 8049), this protein is Ribosomal RNA small subunit methyltransferase G.